Here is a 135-residue protein sequence, read N- to C-terminus: ATP synthase epsilon chain (135 aa).

It belongs to the ATPase epsilon chain family. As to quaternary structure, F-type ATPases have 2 components, CF(1) - the catalytic core - and CF(0) - the membrane proton channel. CF(1) has five subunits: alpha(3), beta(3), gamma(1), delta(1), epsilon(1). CF(0) has three main subunits: a, b and c.

The protein resides in the cell inner membrane. Its function is as follows. Produces ATP from ADP in the presence of a proton gradient across the membrane. This Rhizobium etli (strain ATCC 51251 / DSM 11541 / JCM 21823 / NBRC 15573 / CFN 42) protein is ATP synthase epsilon chain.